A 642-amino-acid polypeptide reads, in one-letter code: Threonine--tRNA ligase (642 aa).

The 61-residue stretch at 1 to 61 (MPVITLPDGS…ENDAQLSIIT (61 aa)) folds into the TGS domain. The interval 243–534 (DHRKIGKQLD…LTEEFAGFFP (292 aa)) is catalytic. Lys286 is modified (N6-acetyllysine). 3 residues coordinate Zn(2+): Cys334, His385, and His511.

It belongs to the class-II aminoacyl-tRNA synthetase family. As to quaternary structure, homodimer. The cofactor is Zn(2+).

It is found in the cytoplasm. The catalysed reaction is tRNA(Thr) + L-threonine + ATP = L-threonyl-tRNA(Thr) + AMP + diphosphate + H(+). Catalyzes the attachment of threonine to tRNA(Thr) in a two-step reaction: L-threonine is first activated by ATP to form Thr-AMP and then transferred to the acceptor end of tRNA(Thr). Also edits incorrectly charged L-seryl-tRNA(Thr). This is Threonine--tRNA ligase from Escherichia coli O8 (strain IAI1).